The following is a 264-amino-acid chain: Thymidylate synthase (264 aa).

Residue Arg21 coordinates dUMP. His51 contacts (6R)-5,10-methylene-5,6,7,8-tetrahydrofolate. 126–127 (RR) is a binding site for dUMP. Cys146 (nucleophile) is an active-site residue. DUMP is bound by residues 166-169 (RSAD), Asn177, and 207-209 (HLY). Asp169 contacts (6R)-5,10-methylene-5,6,7,8-tetrahydrofolate. Ser263 is a binding site for (6R)-5,10-methylene-5,6,7,8-tetrahydrofolate.

It belongs to the thymidylate synthase family. Bacterial-type ThyA subfamily. In terms of assembly, homodimer.

The protein resides in the cytoplasm. The catalysed reaction is dUMP + (6R)-5,10-methylene-5,6,7,8-tetrahydrofolate = 7,8-dihydrofolate + dTMP. It participates in pyrimidine metabolism; dTTP biosynthesis. Functionally, catalyzes the reductive methylation of 2'-deoxyuridine-5'-monophosphate (dUMP) to 2'-deoxythymidine-5'-monophosphate (dTMP) while utilizing 5,10-methylenetetrahydrofolate (mTHF) as the methyl donor and reductant in the reaction, yielding dihydrofolate (DHF) as a by-product. This enzymatic reaction provides an intracellular de novo source of dTMP, an essential precursor for DNA biosynthesis. The polypeptide is Thymidylate synthase (Shouchella clausii (strain KSM-K16) (Alkalihalobacillus clausii)).